Consider the following 497-residue polypeptide: PHD finger protein 10 (497 aa).

The span at 1-13 (MTAAGPGAAPSPG) shows a compositional bias: low complexity. A disordered region spans residues 1-61 (MTAAGPGAAP…SSRSCETSSQ (61 aa)). 3 positions are modified to phosphoserine: Ser11, Ser35, and Ser49. The interval 88 to 184 (MLQEQVSEYL…HYKEYSQMQQ (97 aa)) is essential to induce neural progenitor proliferation. The SAY stretch occupies residues 88–294 (MLQEQVSEYL…PPLDPELPAL (207 aa)). A Glycyl lysine isopeptide (Lys-Gly) (interchain with G-Cter in SUMO2) cross-link involves residue Lys240. Ser269 is subject to Phosphoserine. Over residues 284-295 (EPPLDPELPALD) the composition is skewed to low complexity. The disordered stretch occupies residues 284-368 (EPPLDPELPA…RSVLSKSAPG (85 aa)). An essential to induce neural progenitor proliferation region spans residues 291–333 (LPALDSDGDSDDGEDGGGDEKRKNKGTSDSSSGNVSEGDSPPD). Residues Ser296, Ser300, Ser326, and Ser330 each carry the phosphoserine modification. The span at 296–307 (SDGDSDDGEDGG) shows a compositional bias: acidic residues. Positions 317-327 (TSDSSSGNVSE) are enriched in polar residues. Basic and acidic residues predominate over residues 337-358 (DTFHGRQKSKDKMATPRKDGSK). The segment at 378-435 (LCGICLKGKESNKKGKAESLIHCSQCDNSGHPSCLDMTMELVSMIKTYPWQCMECKTC) adopts a PHD-type 1; degenerate zinc-finger fold. A Glycyl lysine isopeptide (Lys-Gly) (interchain with G-Cter in SUMO2) cross-link involves residue Lys384. The segment at 437–480 (ICGQPHHEEEMMFCDVCDRGYHTFCVGLGAIPSGRWICDCCQRA) adopts a PHD-type 2; degenerate zinc-finger fold.

It belongs to the SAYP family. In terms of assembly, component of neural progenitors-specific chromatin remodeling complex (npBAF complex) composed of at least, ARID1A/BAF250A or ARID1B/BAF250B, SMARCD1/BAF60A, SMARCD3/BAF60C, SMARCA2/BRM/BAF190B, SMARCA4/BRG1/BAF190A, SMARCB1/BAF47, SMARCC1/BAF155, SMARCE1/BAF57, SMARCC2/BAF170, PHF10/BAF45A, ACTL6A/BAF53A and actin. Interacts with ACTL6A/BAF53A, SMARCA2/BRM/BAF190B, SMARCA4/BRG1/BAF190A and PBRM1/BAF180. In terms of tissue distribution, widely expressed. Expressed selectively in neural stem and progenitor cells (at protein level).

The protein resides in the nucleus. Its function is as follows. Involved in transcription activity regulation by chromatin remodeling. Belongs to the neural progenitors-specific chromatin remodeling complex (npBAF complex) and is required for the proliferation of neural progenitors. During neural development a switch from a stem/progenitor to a post-mitotic chromatin remodeling mechanism occurs as neurons exit the cell cycle and become committed to their adult state. The transition from proliferating neural stem/progenitor cells to post-mitotic neurons requires a switch in subunit composition of the npBAF and nBAF complexes. As neural progenitors exit mitosis and differentiate into neurons, npBAF complexes which contain ACTL6A/BAF53A and PHF10/BAF45A, are exchanged for homologous alternative ACTL6B/BAF53B and DPF1/BAF45B or DPF3/BAF45C subunits in neuron-specific complexes (nBAF). The npBAF complex is essential for the self-renewal/proliferative capacity of the multipotent neural stem cells. The nBAF complex along with CREST plays a role regulating the activity of genes essential for dendrite growth. The polypeptide is PHD finger protein 10 (Phf10) (Mus musculus (Mouse)).